The chain runs to 242 residues: ATP-dependent dethiobiotin synthetase BioD (242 aa).

Residue 15–20 (DVGKTV) participates in ATP binding. A Mg(2+)-binding site is contributed by Thr-19. The active site involves Lys-40. Residue Ser-44 participates in substrate binding. Glu-117 contributes to the Mg(2+) binding site. ATP contacts are provided by residues 117 to 120 (EGAG), 178 to 179 (NQ), and 208 to 210 (PYS).

It belongs to the dethiobiotin synthetase family. As to quaternary structure, homodimer. It depends on Mg(2+) as a cofactor.

The protein localises to the cytoplasm. It catalyses the reaction (7R,8S)-7,8-diammoniononanoate + CO2 + ATP = (4R,5S)-dethiobiotin + ADP + phosphate + 3 H(+). The protein operates within cofactor biosynthesis; biotin biosynthesis; biotin from 7,8-diaminononanoate: step 1/2. Its function is as follows. Catalyzes a mechanistically unusual reaction, the ATP-dependent insertion of CO2 between the N7 and N8 nitrogen atoms of 7,8-diaminopelargonic acid (DAPA, also called 7,8-diammoniononanoate) to form a ureido ring. The chain is ATP-dependent dethiobiotin synthetase BioD from Halalkalibacterium halodurans (strain ATCC BAA-125 / DSM 18197 / FERM 7344 / JCM 9153 / C-125) (Bacillus halodurans).